The following is a 628-amino-acid chain: Patulin synthase (628 aa).

Positions 1-20 (MRPIPSILGALGAFATLSAA) are cleaved as a signal peptide. Asn-48 carries an N-linked (GlcNAc...) asparagine glycan. Residues 60-61 (TA) and 81-82 (EA) contribute to the FAD site. An N-linked (GlcNAc...) asparagine glycan is attached at Asn-92. 147-150 (NYMA) serves as a coordination point for FAD. N-linked (GlcNAc...) asparagine glycosylation is found at Asn-197, Asn-260, Asn-386, Asn-429, and Asn-486. His-564 acts as the Proton acceptor in catalysis. FAD-binding positions include Ala-598 and 609 to 610 (PQ).

It belongs to the GMC oxidoreductase family. As to quaternary structure, homodimer. FAD serves as cofactor.

It localises to the cytoplasm. The protein localises to the cell cortex. The protein resides in the vacuole. Its subcellular location is the secreted. It is found in the cell wall. The catalysed reaction is (E)-ascladiol + A = patulin + AH2. The protein operates within mycotoxin biosynthesis; patulin biosynthesis. In terms of biological role, patulin synthase; part of the gene cluster that mediates the biosynthesis of patulin, an acetate-derived tetraketide mycotoxin produced by several fungal species that shows antimicrobial properties against several bacteria. PatE catalyzes the last step of the pathway which is the conversion of E-ascladiol to patulin. The pathway begins with the synthesis of 6-methylsalicylic acid by the polyketide synthase (PKS) patK via condensation of acetate and malonate units. The 6-methylsalicylic acid decarboxylase patG then catalyzes the decarboxylation of 6-methylsalicylic acid to yield m-cresol (also known as 3-methylphenol). These first reactions occur in the cytosol. The intermediate m-cresol is then transported into the endoplasmic reticulum where the cytochrome P450 monooxygenase patH converts it to m-hydroxybenzyl alcohol, which is further converted to gentisyl alcohol by the cytochrome P450 monooxygenase patI. The oxidoreductases patJ and patO further convert gentisyl alcohol to isoepoxydon in the vacuole. PatN catalyzes then the transformation of isoepoxydon into phyllostine. The cluster protein patF is responsible for the conversion from phyllostine to neopatulin whereas the alcohol dehydrogenase patD converts neopatulin to E-ascladiol. The steps between isoepoxydon and E-ascladiol occur in the cytosol, and E-ascladiol is probably secreted to the extracellular space by one of the cluster-specific transporters patC or patM. Finally, the secreted patulin synthase patE catalyzes the conversion of E-ascladiol to patulin. This Aspergillus clavatus (strain ATCC 1007 / CBS 513.65 / DSM 816 / NCTC 3887 / NRRL 1 / QM 1276 / 107) protein is Patulin synthase.